A 606-amino-acid polypeptide reads, in one-letter code: NADH-ubiquinone oxidoreductase chain 5 (606 aa).

15 consecutive transmembrane segments (helical) span residues 3–23 (VINL…LPII), 38–58 (ITKT…LLFI), 87–107 (FFSL…MEFS), 124–144 (LLLF…LQLF), 180–200 (IGDM…NSWE), 216–236 (LLGL…HPWL), 244–264 (TPVS…FTLI), 276–296 (IQTS…ICAL), 304–323 (IIAL…IGIN), 328–350 (AFIH…GSII), 369–389 (MPIT…MPFL), 404–424 (MSYI…MTAS), 460–480 (LILG…PHTT), 483–503 (MTMP…GFTV), and 586–606 (LMKL…LIAL).

The protein belongs to the complex I subunit 5 family. As to quaternary structure, core subunit of respiratory chain NADH dehydrogenase (Complex I) which is composed of 45 different subunits.

Its subcellular location is the mitochondrion inner membrane. It catalyses the reaction a ubiquinone + NADH + 5 H(+)(in) = a ubiquinol + NAD(+) + 4 H(+)(out). In terms of biological role, core subunit of the mitochondrial membrane respiratory chain NADH dehydrogenase (Complex I) which catalyzes electron transfer from NADH through the respiratory chain, using ubiquinone as an electron acceptor. Essential for the catalytic activity and assembly of complex I. The polypeptide is NADH-ubiquinone oxidoreductase chain 5 (MT-ND5) (Loxodonta africana (African elephant)).